The primary structure comprises 877 residues: MDKKKLLLIDGSSVAFRAFFALYQQLDRFKNVAGLHTNAIYGFQLMLSHLLERVEPSHILVAFDAGKTTFRTEMYADYKGGRAKTPDEFREQFPFIRELLDHMGIRHYDLAQYEADDIIGTLDKLAEQDGFDITIVSGDKDLIQLTDEHTVVEISKKGVAEFEAFTPDYLMEEMGLTPAQFIDLKALMGDKSDNIPGVTKVGEKTGIKLLLEHGSLEGIYENIDGMKTSKMKENLINDKEQAFLSKTLATIDTKAPIAIGLEDLVYSGPDVENLGKFYDEMGFKQLKQALNVSSADVSESLDFTIVDQISQDMLSEESIFHFELFGENYHTDNLVGFVWSCGDKLYATDKLELLQDPIFKDFLEKTSLRVYDFKKVKVLLQRFGVDLQAPAFDIRLAKYLLSTVEDNEIATIASLYGQTYLVDDETFYGKGVKKAIPEREKFLEHLACKLAVLVETEPILLEKLSENGQLELLYDMEQPLAFVLAKMEIAGIMVKKETLLEMQAENELVIEKLTQEIYELAGEEFNVNSPKQLGVLLFEKLGLPLEYTKKTKTGYSTAVDVLERLAPIAPIVKKILDYRQIAKIQSTYVIGLQDWILADGKIHTRYVQDLTQTGRLSSVDPNLQNIPARLEQGRLIRKAFVPEWEDSVLLSSDYSQIELRVLAHISKDEHLIKAFQEGADIHTSTAMRVFGIERPDDVTANDRRNAKAVNFGVVYGISDFGLSNNLGISRKEAKAYIDTYFERFPGIKNYMDEVVREARDKGYVETLFKRRRELPDINSRNFNIRGFAERTAINSPIQGSAADILKIAMIQLDKALVAGGYQTKMLLQVHDEIVLEVPKSELVEMKKLVKQTMEEAIQLSVPLIADENEGATWYEAK.

Residues 177–270 enclose the 5'-3' exonuclease domain; that stretch reads TPAQFIDLKA…LEDLVYSGPD (94 aa). The region spanning 302–465 is the 3'-5' exonuclease domain; that stretch reads DFTIVDQISQ…TEPILLEKLS (164 aa).

It belongs to the DNA polymerase type-A family. As to quaternary structure, single-chain monomer with multiple functions.

The enzyme catalyses DNA(n) + a 2'-deoxyribonucleoside 5'-triphosphate = DNA(n+1) + diphosphate. In terms of biological role, in addition to polymerase activity, this DNA polymerase exhibits 3'-5' and 5'-3' exonuclease activity. The protein is DNA polymerase I (polA) of Streptococcus pneumoniae serotype 4 (strain ATCC BAA-334 / TIGR4).